Consider the following 205-residue polypeptide: Keratin-associated protein 4-6 (205 aa).

A run of 30 repeats spans residues cysteine 20 to serine 24, cysteine 25 to threonine 29, cysteine 30 to threonine 34, cysteine 35 to serine 39, cysteine 40 to serine 44, cysteine 45 to glutamine 49, cysteine 50 to valine 54, cysteine 55 to threonine 59, cysteine 60 to serine 64, cysteine 65 to serine 68, cysteine 69 to threonine 73, cysteine 74 to threonine 78, cysteine 79 to serine 83, cysteine 84 to serine 88, cysteine 89 to glutamine 93, cysteine 94 to valine 98, cysteine 99 to threonine 103, cysteine 104 to serine 108, cysteine 114 to serine 118, cysteine 119 to arginine 123, cysteine 124 to glutamine 128, cysteine 129 to valine 133, cysteine 134 to threonine 138, cysteine 139 to serine 143, cysteine 144 to serine 148, cysteine 149 to serine 153, cysteine 154 to serine 158, cysteine 159 to cysteine 163, cysteine 164 to cysteine 168, and cysteine 169 to proline 173. A 30 X 5 AA repeats of C-C-[IRQVEL]-[SPTR]-[STVQRCP] region spans residues cysteine 20–proline 173.

The protein belongs to the KRTAP type 4 family. Interacts with hair keratins. Expressed in the hair follicles.

Functionally, in the hair cortex, hair keratin intermediate filaments are embedded in an interfilamentous matrix, consisting of hair keratin-associated proteins (KRTAP), which are essential for the formation of a rigid and resistant hair shaft through their extensive disulfide bond cross-linking with abundant cysteine residues of hair keratins. The matrix proteins include the high-sulfur and high-glycine-tyrosine keratins. The chain is Keratin-associated protein 4-6 (KRTAP4-6) from Homo sapiens (Human).